We begin with the raw amino-acid sequence, 506 residues long: WD repeat-containing protein 55 homolog (506 aa).

Residues 1-11 (MHRHDCFKTPA) show a composition bias toward basic and acidic residues. 3 disordered regions span residues 1 to 20 (MHRHDCFKTPADEDELDDID), 33 to 87 (QEVL…SDDS), and 100 to 132 (AKRRKEQNAMDGAEPSGSGPSGSGDYSHLDEDD). Positions 33–48 (QEVLNESESDDDEYDL) are enriched in acidic residues. Residues 61–74 (GNISSNESISSDGS) show a composition bias toward low complexity. Residues 78–87 (NAEDTDSDDS) show a composition bias toward acidic residues. 6 WD repeats span residues 156 to 195 (RLEDFITDICFHPERDIIALATIIGDVHLYEYGNEENKLL), 200 to 239 (VHAKACRDVEFTEDGRSLITCSKDKCVMVTDMETEKLKKL), 243 to 281 (AHDDAINKLHVLDERLFATGDDAGTVKLWDFRTKDAIFE), 284 to 323 (EVEDQITQMLTNEQNKLLLATSADGYLTTFNIGARKLYVQ), 326 to 365 (PYEEELNCMGIYRGSSKLVVGTSKGRLYTYNWGYFGYHCD), and 410 to 449 (QHNMPIESLDINSSGELLASSSHNNDVRFWNVKYFEDFGD). The interval 480 to 506 (DMTKEQDDDDNDDGGNNTTAAGSNNVT) is disordered. The segment covering 493 to 506 (GGNNTTAAGSNNVT) has biased composition (low complexity).

Belongs to the WD repeat WDR55 family.

The protein is WD repeat-containing protein 55 homolog of Drosophila mojavensis (Fruit fly).